The sequence spans 1487 residues: Collagen alpha-1(II) chain (1487 aa).

The signal sequence occupies residues 1 to 25 (MIRLGAPQTLVLLTLLVAAVLRCHG). The propeptide at 26-181 (QDVQKAGSCV…PPGLGGNFAA (156 aa)) is N-terminal propeptide. The 59-residue stretch at 32–90 (GSCVQDGQRYNDKDVWKPEPCRICVCDTGTVLCDDIICEDMKDCLSPETPFGECCPICS) folds into the VWFC domain. The disordered stretch occupies residues 96–1234 (ASGQPGPKGQ…GLGQREKGPD (1139 aa)). Composition is skewed to basic and acidic residues over residues 105–116 (QKGEPGDIKDIV) and 133–154 (PRGDRGDKGEKGAPGPRGRDGE). Residues 158-173 (PGNPGPPGPPGPPGPP) show a composition bias toward pro residues. Lys-190 carries the 5-hydroxylysine modification. O-linked (Gal...) hydroxylysine glycosylation occurs at Lys-190. The span at 192–203 (GGAQMGVMQGPM) shows a compositional bias: low complexity. The segment at 201–1214 (GPMGPMGPRG…PGPPGPPGPP (1014 aa)) is triple-helical region. The segment covering 208-217 (PRGPPGPAGA) has biased composition (pro residues). 12 positions are modified to hydroxyproline: Pro-212, Pro-218, Pro-230, Pro-233, Pro-245, Pro-248, Pro-251, Pro-260, Pro-269, Pro-278, Pro-281, and Pro-284. A compositionally biased stretch (low complexity) spans 218–239 (PGPQGFQGNPGEPGEPGVSGPM). Residues 241-250 (PRGPPGPPGK) are compositionally biased toward pro residues. Residues 251 to 265 (PGDDGEAGKPGKSGE) show a composition bias toward basic and acidic residues. Lys-287 carries the 5-hydroxylysine modification. An O-linked (Gal...) hydroxylysine glycan is attached at Lys-287. A Hydroxyproline modification is found at Pro-293. Lys-299 is subject to 5-hydroxylysine. Lys-299 is a glycosylation site (O-linked (Gal...) hydroxylysine). Hydroxyproline is present on Pro-305. 5-hydroxylysine is present on Lys-308. Lys-308 is a glycosylation site (O-linked (Gal...) hydroxylysine). A compositionally biased stretch (low complexity) spans 310–320 (ESGSPGENGSP). Hydroxyproline occurs at positions 314, 320, 329, 350, 356, 365, 368, and 371. The span at 335 to 350 (TGPAGAAGARGNDGQP) shows a compositional bias: low complexity. The span at 360 to 369 (GPAGGPGFPG) shows a compositional bias: gly residues. Low complexity-rich tracts occupy residues 370–382 (APGAKGEAGPTGA) and 391–431 (PRGE…AGAP). Lys-374 is subject to 5-hydroxylysine. Lys-374 carries an O-linked (Gal...) hydroxylysine glycan. Residues Pro-395, Pro-398, Pro-401, Pro-410, and Pro-416 each carry the hydroxyproline modification. The residue at position 419 (Lys-419) is a 5-hydroxylysine. Pro-425, Pro-431, Pro-434, and Pro-440 each carry hydroxyproline. Positions 433–442 (FPGPRGPPGP) are enriched in pro residues. At Lys-452 the chain carries 5-hydroxylysine. The residue at position 458 (Pro-458) is a Hydroxyproline. 2 positions are modified to 5-hydroxylysine: Lys-464 and Lys-470. Hydroxyproline is present on residues Pro-473, Pro-482, Pro-497, Pro-506, Pro-512, and Pro-518. Lys-527 carries the 5-hydroxylysine modification. Residue Pro-530 is modified to Hydroxyproline. The residue at position 542 (Lys-542) is a 5-hydroxylysine. Pro-551, Pro-557, Pro-566, Pro-581, Pro-587, Pro-590, Pro-599, and Pro-605 each carry hydroxyproline. Lys-608 bears the 5-hydroxylysine mark. Lys-608 carries an O-linked (Gal...) hydroxylysine glycan. At Pro-614 the chain carries Hydroxyproline. Lys-620 carries the 5-hydroxylysine modification. Residue Lys-620 is glycosylated (O-linked (Gal...) hydroxylysine). Residues 622–631 (LPGAPGLRGL) show a composition bias toward low complexity. Hydroxyproline is present on residues Pro-623, Pro-626, Pro-632, Pro-644, Pro-659, and Pro-668. The span at 656–667 (QGAPGPSGFQGL) shows a compositional bias: low complexity. 3-hydroxyproline is present on Pro-670. Hydroxyproline occurs at positions 671 and 674. A compositionally biased stretch (low complexity) spans 721–736 (LPGTPGTDGPKGAAGP). Basic and acidic residues predominate over residues 764-775 (KGDRGDVGEKGP). Low complexity-rich tracts occupy residues 833 to 848 (AGFAGPPGADGQPGAK) and 877 to 913 (PTGVTGPKGARGAQGPPGATGFPGAAGRVGPPGSNGN). 3-hydroxyproline is present on Pro-907. Residues Pro-908, Pro-914, and Pro-920 each carry the 4-hydroxyproline modification. The span at 1069-1079 (APGPPGSPGPA) shows a compositional bias: pro residues. Over residues 1091–1109 (AGAQGPMGPAGPAGARGMP) the composition is skewed to low complexity. Basic and acidic residues predominate over residues 1115-1129 (RGDKGETGEAGERGL). At Lys-1130 the chain carries 5-hydroxylysine. O-linked (Gal...) hydroxylysine glycosylation is present at Lys-1130. At Pro-1144 the chain carries 3-hydroxyproline. Residues 1148-1157 (SGDQGASGPA) are compositionally biased toward low complexity. Pro-1181 bears the 4-hydroxyproline mark. Pro-1186 carries the 3-hydroxyproline modification. Residue Pro-1187 is modified to 4-hydroxyproline. Residues 1199–1216 (AGPPGNPGPPGPPGPPGP) are compositionally biased toward pro residues. Residue Pro-1201 is modified to 3-hydroxyproline. 4-hydroxyproline is present on residues Pro-1202 and Pro-1205. A 3-hydroxyproline modification is found at Pro-1207. A 4-hydroxyproline mark is found at Pro-1208 and Pro-1211. Pro-1213 is subject to 3-hydroxyproline. At Pro-1214 the chain carries 4-hydroxyproline. The interval 1215 to 1241 (GPGIDMSAFAGLGQREKGPDPLQYMRA) is nonhelical region (C-terminal). The Fibrillar collagen NC1 domain occupies 1253–1487 (AEVDATLKSL…GVDIGPVCFL (235 aa)). 3 disulfides stabilise this stretch: Cys-1283–Cys-1315, Cys-1323–Cys-1485, and Cys-1393–Cys-1438. Ca(2+) is bound by residues Asp-1301, Asn-1303, Gln-1304, Cys-1306, and Asp-1309. The N-linked (GlcNAc...) asparagine glycan is linked to Asn-1388.

This sequence belongs to the fibrillar collagen family. Homotrimers of alpha 1(II) chains. Probably 3-hydroxylated on prolines by LEPREL1. Proline residues at the third position of the tripeptide repeating unit (G-X-P) are hydroxylated in some or all of the chains. Proline residues at the second position of the tripeptide repeating unit (G-P-X) are hydroxylated in some of the chains. Post-translationally, O-linked glycans consist of Glc-Gal disaccharides bound to the oxygen atom of post-translationally added hydroxyl groups. In terms of processing, contains mostly 4-hydroxyproline. Prolines at the third position of the tripeptide repeating unit (G-X-P) are 4-hydroxylated in some or all of the chains. Contains 3-hydroxyproline at a few sites. This modification occurs on the first proline residue in the sequence motif Gly-Pro-Hyp, where Hyp is 4-hydroxyproline. Post-translationally, lysine residues at the third position of the tripeptide repeating unit (G-X-Y) are 5-hydroxylated in some or all of the chains. In terms of processing, O-glycosylated on hydroxylated lysine residues. The O-linked glycan consists of a Glc-Gal disaccharide.

It is found in the secreted. Its subcellular location is the extracellular space. The protein resides in the extracellular matrix. Its function is as follows. Type II collagen is specific for cartilaginous tissues. It is essential for the normal embryonic development of the skeleton, for linear growth and for the ability of cartilage to resist compressive forces. The polypeptide is Collagen alpha-1(II) chain (Bos taurus (Bovine)).